Here is a 68-residue protein sequence, read N- to C-terminus: Large ribosomal subunit protein uL29 (68 aa).

It belongs to the universal ribosomal protein uL29 family.

The chain is Large ribosomal subunit protein uL29 from Erythrobacter litoralis (strain HTCC2594).